Here is a 522-residue protein sequence, read N- to C-terminus: 2-isopropylmalate synthase (522 aa).

The Pyruvate carboxyltransferase domain occupies 5–267 (VIIFDTTLRD…ETGINAKEIH (263 aa)). Residues aspartate 14, histidine 202, histidine 204, and asparagine 238 each coordinate Mn(2+). Residues 392–522 (QLQQLVVQSD…MQKNRELGGV (131 aa)) are regulatory domain.

Belongs to the alpha-IPM synthase/homocitrate synthase family. LeuA type 1 subfamily. In terms of assembly, homodimer. Requires Mn(2+) as cofactor.

The protein resides in the cytoplasm. The catalysed reaction is 3-methyl-2-oxobutanoate + acetyl-CoA + H2O = (2S)-2-isopropylmalate + CoA + H(+). It functions in the pathway amino-acid biosynthesis; L-leucine biosynthesis; L-leucine from 3-methyl-2-oxobutanoate: step 1/4. In terms of biological role, catalyzes the condensation of the acetyl group of acetyl-CoA with 3-methyl-2-oxobutanoate (2-ketoisovalerate) to form 3-carboxy-3-hydroxy-4-methylpentanoate (2-isopropylmalate). This Shewanella putrefaciens (strain CN-32 / ATCC BAA-453) protein is 2-isopropylmalate synthase.